A 218-amino-acid chain; its full sequence is Adenylate kinase (218 aa).

10 to 15 serves as a coordination point for ATP; it reads GAGKGT. An NMP region spans residues 30 to 59; it reads STGDMLRAAINEGTPLGLEAKKVMDAGKLV. AMP contacts are provided by residues Thr31, Arg36, 57 to 59, 85 to 88, and Gln92; these read KLV and GFPR. An LID region spans residues 122–159; that stretch reads GRRVHPASGRTYHVLFNPPAKEGVDDITGDPLVQREDD. ATP-binding positions include Arg123 and 132–133; that span reads TY. 2 residues coordinate AMP: Arg156 and Arg167. Gly203 contacts ATP.

It belongs to the adenylate kinase family. In terms of assembly, monomer.

The protein localises to the cytoplasm. The catalysed reaction is AMP + ATP = 2 ADP. It functions in the pathway purine metabolism; AMP biosynthesis via salvage pathway; AMP from ADP: step 1/1. Its function is as follows. Catalyzes the reversible transfer of the terminal phosphate group between ATP and AMP. Plays an important role in cellular energy homeostasis and in adenine nucleotide metabolism. This is Adenylate kinase from Chlorobium phaeobacteroides (strain BS1).